Consider the following 335-residue polypeptide: Tumor necrosis factor receptor superfamily member 6 (335 aa).

A signal peptide spans 1–25 (MLGIWTLLPLVLTSVARLSSKSVNA). The Extracellular portion of the chain corresponds to 26–173 (QVTDINSKGL…KCKEEGSRSN (148 aa)). O-linked (GalNAc...) threonine glycosylation is present at Thr28. TNFR-Cys repeat units follow at residues 47–83 (QNLE…PDCV), 84–127 (PCQE…NTKC), and 128–166 (RCKP…TKCK). Disulfide bonds link Cys59/Cys73, Cys63/Cys82, Cys85/Cys101, Cys104/Cys119, Cys107/Cys127, Cys129/Cys143, Cys146/Cys157, and Cys149/Cys165. N-linked (GlcNAc...) asparagine glycans are attached at residues Asn118 and Asn136. The chain crosses the membrane as a helical span at residues 174–190 (LGWLCLLLLPIPLIVWV). Residues 191 to 335 (KRKEVQKTCR…NFRNEIQSLV (145 aa)) lie on the Cytoplasmic side of the membrane. The S-palmitoyl cysteine moiety is linked to residue Cys199. Ser209 bears the Phosphoserine mark. The interval 212 to 317 (SPTLNPETVA…EKIQTIILKD (106 aa)) is interaction with HIPK3. Position 214 is a phosphothreonine (Thr214). Residue Ser225 is modified to Phosphoserine. Residues 230–254 (SKYITTIAGVMTLSQVKGFVRKNGV) are interaction with CALM. Positions 230 to 314 (SKYITTIAGV…TLAEKIQTII (85 aa)) constitute a Death domain. Arg250 is a glycosylation site ((Microbial infection) N-beta-linked (GlcNAc) arginine).

As to quaternary structure, component of the death-induced signaling complex (DISC) composed of cell surface receptor FAS/CD95, adapter protein FADD and the CASP8 protease; recruitment of CASP8 to the complex is required for processing of CASP8 into the p18 and p10 subunits. Interacts directly (via DED domain) with NOL3 (via CARD domain); inhibits death-inducing signaling complex (DISC) assembly by inhibiting the increase in FAS-FADD binding induced by FAS activation. Binds DAXX. Interacts with HIPK3. Part of a complex containing HIPK3 and FADD. Binds RIPK1 and FAIM2. Interacts with BABAM2 and FEM1B. Interacts with CALM. In the absence of stimulation, interacts with BIRC2, DDX3X and GSK3B. The interaction with BIRC2 and DDX3X is further enhanced upon receptor stimulation and accompanied by DDX3X and BIRC2 cleavage. In terms of processing, (Microbial infection) Glycosylated at Arg-250 by enteropathogenic E.coli protein NleB1: arginine GlcNAcylation prevents homotypic/heterotypic death domain interactions. Post-translationally, palmitoylated. Palmitoylation by ZDHHC7 prevents the lysosomal degradation of FAS regulating its expression at the plasma membrane. N- and O-glycosylated. O-glycosylated with core 1 or possibly core 8 glycans. In terms of tissue distribution, isoform 1 and isoform 6 are expressed at equal levels in resting peripheral blood mononuclear cells. After activation there is an increase in isoform 1 and decrease in the levels of isoform 6.

It localises to the cell membrane. It is found in the membrane raft. The protein resides in the secreted. Its function is as follows. Receptor for TNFSF6/FASLG. The adapter molecule FADD recruits caspase CASP8 to the activated receptor. The resulting death-inducing signaling complex (DISC) performs CASP8 proteolytic activation which initiates the subsequent cascade of caspases (aspartate-specific cysteine proteases) mediating apoptosis. FAS-mediated apoptosis may have a role in the induction of peripheral tolerance, in the antigen-stimulated suicide of mature T-cells, or both. The secreted isoforms 2 to 6 block apoptosis (in vitro). The sequence is that of Tumor necrosis factor receptor superfamily member 6 (FAS) from Homo sapiens (Human).